The following is a 204-amino-acid chain: Thymidine kinase (204 aa).

Residues 15 to 22 and 88 to 91 each bind ATP; these read GSMFSGKS and DEVQ. E89 serves as the catalytic Proton acceptor. 4 residues coordinate Zn(2+): C145, C148, C183, and C186.

It belongs to the thymidine kinase family. As to quaternary structure, homotetramer.

It localises to the cytoplasm. The catalysed reaction is thymidine + ATP = dTMP + ADP + H(+). This chain is Thymidine kinase, found in Halalkalibacterium halodurans (strain ATCC BAA-125 / DSM 18197 / FERM 7344 / JCM 9153 / C-125) (Bacillus halodurans).